Reading from the N-terminus, the 220-residue chain is MDKHTAAIPTLTIKVVLLGESAVGKSSIVLRFVSDDFKESKEPTIGAAFLTKRITRDGKVIKFEIWDTAGQERFAPLAPMYYRNAQAALVVFDVTNEGSFYKAQNWVEELHEKVGHDIVIALVGNKMDLLNNDDENENRAMKAPAVQNLCERENLLYFEASAKTGENIYQIFQTLGEKVPCPEQNTRQSSTHDRTITDNQRIDLESTTVESTRETGGCNC.

Residues 19–26 (GESAVGKS), 67–71 (DTAGQ), and 125–128 (NKMD) contribute to the GTP site. S-geranylgeranyl cysteine attachment occurs at residues Cys-218 and Cys-220. Cys-220 bears the Cysteine methyl ester mark.

It belongs to the small GTPase superfamily. Rab family.

It is found in the cell membrane. In terms of biological role, required for transport in the endocytic pathway and for correct sorting of the vacuolar hydrolases suggesting a possible intersection of the endocytic with the vacuolar sorting pathway. May be involved in recruiting the MON1-CCZ1 complex to membranes enriched in phosphatidylinositol 3-phosphate (PtdIns[3]P) or other charged lipids, leading to recruitment of YPT7. The polypeptide is GTP-binding protein YPT53 (YPT53) (Saccharomyces cerevisiae (strain ATCC 204508 / S288c) (Baker's yeast)).